Reading from the N-terminus, the 438-residue chain is uncharacterized protein (438 aa).

A signal peptide spans 1–20; the sequence is MNTRLALVLCAVGSGVLSFS. Cys-21 carries N-palmitoyl cysteine lipidation. Cys-21 carries the S-diacylglycerol cysteine lipid modification.

The protein resides in the cell membrane. This is an uncharacterized protein from Treponema pallidum (strain Nichols).